Consider the following 678-residue polypeptide: Glycine--tRNA ligase beta subunit (678 aa).

It belongs to the class-II aminoacyl-tRNA synthetase family. In terms of assembly, tetramer of two alpha and two beta subunits.

Its subcellular location is the cytoplasm. The enzyme catalyses tRNA(Gly) + glycine + ATP = glycyl-tRNA(Gly) + AMP + diphosphate. This chain is Glycine--tRNA ligase beta subunit, found in Streptococcus suis (strain 98HAH33).